The sequence spans 166 residues: MFHDPRFWTALAFVLFFVIFGRKLWVAITGHLDARADSVRHDLDEAARLRREAEQMLEDANREREKTLAETQAMLARSEAEAAGLAERARKDAEAAAARYEKMAQDRIHAAERSAIREIQDRAAQIAVAAARDVVSTRLTESPDIAATLIDKGIDSLPEALRRSAA.

Residues 7–29 (FWTALAFVLFFVIFGRKLWVAIT) form a helical membrane-spanning segment.

Belongs to the ATPase B chain family. F-type ATPases have 2 components, F(1) - the catalytic core - and F(0) - the membrane proton channel. F(1) has five subunits: alpha(3), beta(3), gamma(1), delta(1), epsilon(1). F(0) has three main subunits: a(1), b(2) and c(10-14). The alpha and beta chains form an alternating ring which encloses part of the gamma chain. F(1) is attached to F(0) by a central stalk formed by the gamma and epsilon chains, while a peripheral stalk is formed by the delta and b chains.

It localises to the cell inner membrane. Its function is as follows. F(1)F(0) ATP synthase produces ATP from ADP in the presence of a proton or sodium gradient. F-type ATPases consist of two structural domains, F(1) containing the extramembraneous catalytic core and F(0) containing the membrane proton channel, linked together by a central stalk and a peripheral stalk. During catalysis, ATP synthesis in the catalytic domain of F(1) is coupled via a rotary mechanism of the central stalk subunits to proton translocation. Component of the F(0) channel, it forms part of the peripheral stalk, linking F(1) to F(0). This Gluconobacter oxydans (strain 621H) (Gluconobacter suboxydans) protein is ATP synthase subunit b 1.